The primary structure comprises 188 residues: dCTP deaminase (188 aa).

Residues 111 to 116 (KSTYAR), 135 to 137 (TLE), Gln156, Tyr170, Lys179, and Gln180 each bind dCTP. The active-site Proton donor/acceptor is Glu137.

Belongs to the dCTP deaminase family. As to quaternary structure, homotrimer.

The enzyme catalyses dCTP + H2O + H(+) = dUTP + NH4(+). Its pathway is pyrimidine metabolism; dUMP biosynthesis; dUMP from dCTP (dUTP route): step 1/2. In terms of biological role, catalyzes the deamination of dCTP to dUTP. The polypeptide is dCTP deaminase (Orientia tsutsugamushi (strain Ikeda) (Rickettsia tsutsugamushi)).